A 294-amino-acid chain; its full sequence is MDFQVFIITGLSGAGKSQSLRILEDLGFFCVDNIPPKLVPTLIDLCLATNGKISGLAVVIDIRTENFLEDFKEMVDTINSKNIPFKILFLEADDEVIVKRYNETRRIHPLLREGKTILESIKLEKERLQEIKTFATDIIDTSQFSLKDLKDNILKILSSFNSSVKSNFLITITSFGFKYGLPIDAHLVFDVRFLPNPFYDPKLRPFSGQAEEVKNFVLSKKEARDFIEYVKNLLDFLVPLYQEEGRNILNIAIGCTGGRHRAVVIADEIFSYLSQKYNTHLFHRDVDKDRNIAK.

10–17 contacts ATP; sequence GLSGAGKS. Position 61–64 (61–64) interacts with GTP; the sequence is DIRT.

This sequence belongs to the RapZ-like family.

Its function is as follows. Displays ATPase and GTPase activities. This Dictyoglomus thermophilum (strain ATCC 35947 / DSM 3960 / H-6-12) protein is Nucleotide-binding protein DICTH_1001.